Here is a 299-residue protein sequence, read N- to C-terminus: Bifunctional protein FolD (299 aa).

Residues 168 to 170 (GRS), Ser193, and Ile234 contribute to the NADP(+) site.

It belongs to the tetrahydrofolate dehydrogenase/cyclohydrolase family. As to quaternary structure, homodimer.

The catalysed reaction is (6R)-5,10-methylene-5,6,7,8-tetrahydrofolate + NADP(+) = (6R)-5,10-methenyltetrahydrofolate + NADPH. It catalyses the reaction (6R)-5,10-methenyltetrahydrofolate + H2O = (6R)-10-formyltetrahydrofolate + H(+). It functions in the pathway one-carbon metabolism; tetrahydrofolate interconversion. Functionally, catalyzes the oxidation of 5,10-methylenetetrahydrofolate to 5,10-methenyltetrahydrofolate and then the hydrolysis of 5,10-methenyltetrahydrofolate to 10-formyltetrahydrofolate. The protein is Bifunctional protein FolD of Bartonella henselae (strain ATCC 49882 / DSM 28221 / CCUG 30454 / Houston 1) (Rochalimaea henselae).